Reading from the N-terminus, the 343-residue chain is uncharacterized protein (343 aa).

Disordered regions lie at residues Met1–Thr27 and Ser205–Gln247. The segment covering Arg16–Thr27 has biased composition (basic and acidic residues). A compositionally biased stretch (acidic residues) spans Gly219–Gly228. Positions Asn229–Gln247 are enriched in basic and acidic residues.

In terms of biological role, dispensable for normal development and fertility. This is an uncharacterized protein from Bos taurus (Bovine).